The following is a 751-amino-acid chain: Cyanobacterial phytochrome B (751 aa).

C17 contacts a tetrapyrrole. A chromophore binding domain region spans residues 22–511; it reads IHIPGLIQPH…RSAIIGIVLQ (490 aa). The GAF domain maps to 152-320; it reads TTTEISQILA…MTSVEMSAKE (169 aa). Positions 536–751 constitute a Histidine kinase domain; sequence IASHDLKEPL…STFYFTLQDV (216 aa). Residue H539 is modified to Phosphohistidine; by autocatalysis.

The protein in the N-terminal section; belongs to the phytochrome family. In terms of processing, contains one covalently linked tetrapyrrole chromophore.

The catalysed reaction is ATP + protein L-histidine = ADP + protein N-phospho-L-histidine.. In terms of biological role, photoreceptor which exists in two forms that are reversibly interconvertible by light: the R form that absorbs maximally in the red region of the spectrum and the FR form that absorbs maximally in the far-red region. The sequence is that of Cyanobacterial phytochrome B (bphB) from Nostoc sp. (strain PCC 7120 / SAG 25.82 / UTEX 2576).